Reading from the N-terminus, the 235-residue chain is Phosphoribosylaminoimidazole-succinocarboxamide synthase (235 aa).

The protein belongs to the SAICAR synthetase family.

It catalyses the reaction 5-amino-1-(5-phospho-D-ribosyl)imidazole-4-carboxylate + L-aspartate + ATP = (2S)-2-[5-amino-1-(5-phospho-beta-D-ribosyl)imidazole-4-carboxamido]succinate + ADP + phosphate + 2 H(+). It functions in the pathway purine metabolism; IMP biosynthesis via de novo pathway; 5-amino-1-(5-phospho-D-ribosyl)imidazole-4-carboxamide from 5-amino-1-(5-phospho-D-ribosyl)imidazole-4-carboxylate: step 1/2. This is Phosphoribosylaminoimidazole-succinocarboxamide synthase from Chlorobaculum parvum (strain DSM 263 / NCIMB 8327) (Chlorobium vibrioforme subsp. thiosulfatophilum).